The chain runs to 92 residues: Ictacalcin (92 aa).

EF-hand domains are found at residues 12-47 (ISTF…AFGN) and 49-84 (SDQA…TTML). Thr27, Glu32, Asp62, Asn64, Asp66, and Glu73 together coordinate Ca(2+).

This sequence belongs to the S-100 family. In terms of tissue distribution, abundant in epithelial cells of olfactory rosette, barbel, skin and gill but not brain or muscle.

Functionally, plays an important role in catfish calcium homeostasis. The polypeptide is Ictacalcin (Ictalurus punctatus (Channel catfish)).